We begin with the raw amino-acid sequence, 92 residues long: Small ribosomal subunit protein bS20 (92 aa).

The segment at 1–23 (MANSPSAKKRAIQAEKRRSHNAS) is disordered.

This sequence belongs to the bacterial ribosomal protein bS20 family.

Its function is as follows. Binds directly to 16S ribosomal RNA. This chain is Small ribosomal subunit protein bS20, found in Stutzerimonas stutzeri (strain A1501) (Pseudomonas stutzeri).